The chain runs to 534 residues: Glycerol kinase 5 (534 aa).

Ser33 and Thr34 together coordinate ATP. Residues Arg103, Asp280, and Gln281 each contribute to the glycerol site. Residues Thr302, Gly345, and Gly445 each contribute to the ATP site.

The protein belongs to the FGGY kinase family. In terms of tissue distribution, expressed predominantly in sebaceous glands.

It is found in the cytoplasm. It carries out the reaction glycerol + ATP = sn-glycerol 3-phosphate + ADP + H(+). It participates in polyol metabolism; glycerol degradation via glycerol kinase pathway; sn-glycerol 3-phosphate from glycerol: step 1/1. Skin-specific kinase that plays a key role in glycerol metabolism, catalyzing its phosphorylation to produce sn-glycerol 3-phosphate. Involved in skin-specific regulation of sterol regulatory element-binding protein (SREBP) processing and lipid biosynthesis. In Mus musculus (Mouse), this protein is Glycerol kinase 5 (Gk5).